Consider the following 85-residue polypeptide: Putative membrane protein insertion efficiency factor (85 aa).

The protein belongs to the UPF0161 family.

Its subcellular location is the cell inner membrane. In terms of biological role, could be involved in insertion of integral membrane proteins into the membrane. This is Putative membrane protein insertion efficiency factor from Shewanella woodyi (strain ATCC 51908 / MS32).